A 289-amino-acid chain; its full sequence is Homeobox protein engrailed-2 (289 aa).

2 stretches are compositionally biased toward basic and acidic residues: residues methionine 1 to alanine 12 and glutamate 60 to arginine 83. Disordered regions lie at residues methionine 1–proline 166 and serine 179–alanine 206. The segment covering valine 96 to glycine 114 has biased composition (gly residues). Residues leucine 142–serine 160 are compositionally biased toward low complexity. Positions aspartate 200 to threonine 259 form a DNA-binding region, homeobox.

Belongs to the engrailed homeobox family.

The protein localises to the nucleus. The sequence is that of Homeobox protein engrailed-2 (EN2) from Gallus gallus (Chicken).